The sequence spans 316 residues: ATP synthase gamma chain (316 aa).

The protein belongs to the ATPase gamma chain family. In terms of assembly, F-type ATPases have 2 components, CF(1) - the catalytic core - and CF(0) - the membrane proton channel. CF(1) has five subunits: alpha(3), beta(3), gamma(1), delta(1), epsilon(1). CF(0) has three main subunits: a, b and c.

The protein localises to the cellular thylakoid membrane. Functionally, produces ATP from ADP in the presence of a proton gradient across the membrane. The gamma chain is believed to be important in regulating ATPase activity and the flow of protons through the CF(0) complex. In Prochlorococcus marinus (strain SARG / CCMP1375 / SS120), this protein is ATP synthase gamma chain.